We begin with the raw amino-acid sequence, 274 residues long: Outer surface protein A (274 aa).

Residues M1 to A16 form the signal peptide. A lipid anchor (N-palmitoyl cysteine) is attached at C17. C17 carries S-diacylglycerol cysteine lipidation.

It belongs to the OspA lipoprotein family.

It is found in the cell outer membrane. The protein localises to the cell surface. The sequence is that of Outer surface protein A from Borreliella burgdorferi (Lyme disease spirochete).